We begin with the raw amino-acid sequence, 338 residues long: DNA-directed RNA polymerase subunit alpha (338 aa).

The tract at residues 1–233 (MLREEVAVST…DLFIPFLHAE (233 aa)) is alpha N-terminal domain (alpha-NTD). Positions 266-338 (IALKFIFIDQ…IDLPKNKFSN (73 aa)) are alpha C-terminal domain (alpha-CTD).

It belongs to the RNA polymerase alpha chain family. In terms of assembly, in plastids the minimal PEP RNA polymerase catalytic core is composed of four subunits: alpha, beta, beta', and beta''. When a (nuclear-encoded) sigma factor is associated with the core the holoenzyme is formed, which can initiate transcription.

The protein localises to the plastid. It is found in the chloroplast. It carries out the reaction RNA(n) + a ribonucleoside 5'-triphosphate = RNA(n+1) + diphosphate. DNA-dependent RNA polymerase catalyzes the transcription of DNA into RNA using the four ribonucleoside triphosphates as substrates. The protein is DNA-directed RNA polymerase subunit alpha of Nandina domestica (Heavenly bamboo).